Here is a 337-residue protein sequence, read N- to C-terminus: Anthranilate phosphoribosyltransferase (337 aa).

Residues G82, 85-86 (GD), T90, 92-95 (NIST), 110-118 (KHGGRSVSS), and S122 contribute to the 5-phospho-alpha-D-ribose 1-diphosphate site. G82 provides a ligand contact to anthranilate. S94 provides a ligand contact to Mg(2+). R168 provides a ligand contact to anthranilate. Mg(2+)-binding residues include D226 and E227.

It belongs to the anthranilate phosphoribosyltransferase family. Homodimer. Mg(2+) is required as a cofactor.

It carries out the reaction N-(5-phospho-beta-D-ribosyl)anthranilate + diphosphate = 5-phospho-alpha-D-ribose 1-diphosphate + anthranilate. It participates in amino-acid biosynthesis; L-tryptophan biosynthesis; L-tryptophan from chorismate: step 2/5. Functionally, catalyzes the transfer of the phosphoribosyl group of 5-phosphorylribose-1-pyrophosphate (PRPP) to anthranilate to yield N-(5'-phosphoribosyl)-anthranilate (PRA). This Francisella tularensis subsp. tularensis (strain WY96-3418) protein is Anthranilate phosphoribosyltransferase.